Here is a 454-residue protein sequence, read N- to C-terminus: COBRA-like protein 6 (454 aa).

A signal peptide spans 1–24 (MGAMLNLLLVVTVILCSILSPTRF). N-linked (GlcNAc...) asparagine glycosylation is found at N104, N191, N320, N355, and N391. A lipid anchor (GPI-anchor amidated serine) is attached at S429. Residues 430–454 (SSSSAVISSVSVVFCFLLHHLLLLV) constitute a propeptide, removed in mature form.

This sequence belongs to the COBRA family. In terms of tissue distribution, expressed in flowers and siliques.

It localises to the cell membrane. The chain is COBRA-like protein 6 (COBL6) from Arabidopsis thaliana (Mouse-ear cress).